The following is a 60-amino-acid chain: Sec-independent protein translocase protein TatA (60 aa).

Residues 1–21 (MTPAGPAQLLIVALVVIVLFG) form a helical membrane-spanning segment.

The protein belongs to the TatA/E family. In terms of assembly, the Tat system comprises two distinct complexes: a TatABC complex, containing multiple copies of TatA, TatB and TatC subunits, and a separate TatA complex, containing only TatA subunits. Substrates initially bind to the TatABC complex, which probably triggers association of the separate TatA complex to form the active translocon.

It is found in the cell membrane. Part of the twin-arginine translocation (Tat) system that transports large folded proteins containing a characteristic twin-arginine motif in their signal peptide across membranes. TatA could form the protein-conducting channel of the Tat system. This chain is Sec-independent protein translocase protein TatA, found in Corynebacterium glutamicum (strain R).